A 559-amino-acid polypeptide reads, in one-letter code: Dihydroxy-acid dehydratase (559 aa).

D78 contacts Mg(2+). C119 provides a ligand contact to [2Fe-2S] cluster. The Mg(2+) site is built by D120 and K121. N6-carboxylysine is present on K121. Residue C191 participates in [2Fe-2S] cluster binding. E442 serves as a coordination point for Mg(2+). S468 acts as the Proton acceptor in catalysis.

Belongs to the IlvD/Edd family. As to quaternary structure, homodimer. [2Fe-2S] cluster serves as cofactor. Requires Mg(2+) as cofactor.

It catalyses the reaction (2R)-2,3-dihydroxy-3-methylbutanoate = 3-methyl-2-oxobutanoate + H2O. The enzyme catalyses (2R,3R)-2,3-dihydroxy-3-methylpentanoate = (S)-3-methyl-2-oxopentanoate + H2O. It functions in the pathway amino-acid biosynthesis; L-isoleucine biosynthesis; L-isoleucine from 2-oxobutanoate: step 3/4. It participates in amino-acid biosynthesis; L-valine biosynthesis; L-valine from pyruvate: step 3/4. Functionally, functions in the biosynthesis of branched-chain amino acids. Catalyzes the dehydration of (2R,3R)-2,3-dihydroxy-3-methylpentanoate (2,3-dihydroxy-3-methylvalerate) into 2-oxo-3-methylpentanoate (2-oxo-3-methylvalerate) and of (2R)-2,3-dihydroxy-3-methylbutanoate (2,3-dihydroxyisovalerate) into 2-oxo-3-methylbutanoate (2-oxoisovalerate), the penultimate precursor to L-isoleucine and L-valine, respectively. The sequence is that of Dihydroxy-acid dehydratase from Agathobacter rectalis (strain ATCC 33656 / DSM 3377 / JCM 17463 / KCTC 5835 / VPI 0990) (Eubacterium rectale).